Consider the following 595-residue polypeptide: Aspartate--tRNA ligase (595 aa).

Glutamate 173 contributes to the L-aspartate binding site. The aspartate stretch occupies residues 197–200 (QLFK). Arginine 219 provides a ligand contact to L-aspartate. Residues 219–221 (RDE) and glutamine 228 each bind ATP. L-aspartate is bound at residue histidine 449. Glutamate 483 contacts ATP. Arginine 490 lines the L-aspartate pocket. 535–538 (GLDR) is an ATP binding site.

Belongs to the class-II aminoacyl-tRNA synthetase family. Type 1 subfamily. Homodimer.

It localises to the cytoplasm. It carries out the reaction tRNA(Asp) + L-aspartate + ATP = L-aspartyl-tRNA(Asp) + AMP + diphosphate. Its function is as follows. Catalyzes the attachment of L-aspartate to tRNA(Asp) in a two-step reaction: L-aspartate is first activated by ATP to form Asp-AMP and then transferred to the acceptor end of tRNA(Asp). This is Aspartate--tRNA ligase from Shewanella woodyi (strain ATCC 51908 / MS32).